We begin with the raw amino-acid sequence, 356 residues long: Alternative oxidase, mitochondrial (356 aa).

The helical transmembrane segment at 152–172 threads the bilayer; the sequence is VIRFIFLETVAGVPGMVGGML. Fe cation contacts are provided by Glu159, Glu198, and His201. A helical membrane pass occupies residues 217 to 237; the sequence is LMVLGAQGVFFNGFFISYLIS. Fe cation is bound by residues Glu249, Glu304, and His307. The tract at residues 330–356 is disordered; that stretch reads YDNPEAPHPTKSAEIVKPTGWERDEVI.

Belongs to the alternative oxidase family. Requires Fe cation as cofactor.

It localises to the mitochondrion inner membrane. Functionally, catalyzes cyanide-resistant oxygen consumption. May increase respiration when the cytochrome respiratory pathway is restricted, or in response to low temperatures. This is Alternative oxidase, mitochondrial (AOX1) from Ajellomyces capsulatus (Darling's disease fungus).